We begin with the raw amino-acid sequence, 226 residues long: 2,3-bisphosphoglycerate-dependent phosphoglycerate mutase (226 aa).

Substrate is bound by residues 8 to 15 (RHGQSVWN), 21 to 22 (TG), R58, 109 to 112 (ERMY), K120, 136 to 137 (RR), and 180 to 181 (GN). The active-site Tele-phosphohistidine intermediate is the H9. The Proton donor/acceptor role is filled by E109.

This sequence belongs to the phosphoglycerate mutase family. BPG-dependent PGAM subfamily.

It carries out the reaction (2R)-2-phosphoglycerate = (2R)-3-phosphoglycerate. The protein operates within carbohydrate degradation; glycolysis; pyruvate from D-glyceraldehyde 3-phosphate: step 3/5. Functionally, catalyzes the interconversion of 2-phosphoglycerate and 3-phosphoglycerate. The polypeptide is 2,3-bisphosphoglycerate-dependent phosphoglycerate mutase (Chlamydia trachomatis serovar L2 (strain ATCC VR-902B / DSM 19102 / 434/Bu)).